The following is a 553-amino-acid chain: Glycerol-3-phosphate dehydrogenase (553 aa).

Residue D13–E41 coordinates FAD.

It belongs to the FAD-dependent glycerol-3-phosphate dehydrogenase family. FAD serves as cofactor.

The protein localises to the cytoplasm. It catalyses the reaction a quinone + sn-glycerol 3-phosphate = dihydroxyacetone phosphate + a quinol. This chain is Glycerol-3-phosphate dehydrogenase (glpD), found in Synechocystis sp. (strain ATCC 27184 / PCC 6803 / Kazusa).